Consider the following 76-residue polypeptide: UPF0235 protein MRA_1997 (76 aa).

It belongs to the UPF0235 family.

In Mycobacterium tuberculosis (strain ATCC 25177 / H37Ra), this protein is UPF0235 protein MRA_1997.